The primary structure comprises 307 residues: 2-carboxy-1,4-naphthoquinone phytyltransferase (307 aa).

Transmembrane regions (helical) follow at residues 27–47 (MYTV…GLTG), 51–71 (GDVF…INLS), 98–118 (LVFL…MSMS), 125–145 (TVLE…GPPF), 147–167 (LGYL…LAIA), 177–197 (FSWN…IILF), 223–243 (LGSQ…AIGV), and 284–304 (FIAV…YGWA).

The protein belongs to the MenA family. Type 2 subfamily.

The protein localises to the cell inner membrane. It carries out the reaction 2-carboxy-1,4-naphthoquinone + phytyl diphosphate + H(+) = demethylphylloquinone + CO2 + diphosphate. It participates in cofactor biosynthesis; phylloquinone biosynthesis. In terms of biological role, involved in the synthesis of phylloquinone (vitamin K1). Catalyzes the transfer of a prenyl chain to 2-carboxy-1,4-naphthoquinone. In Synechocystis sp. (strain ATCC 27184 / PCC 6803 / Kazusa), this protein is 2-carboxy-1,4-naphthoquinone phytyltransferase.